The following is a 300-amino-acid chain: NAD kinase (300 aa).

The Proton acceptor role is filled by Asp-75. NAD(+)-binding positions include 75–76, 149–150, Arg-177, Asp-179, 190–195, Ala-214, and Gln-248; these read DG, ND, and TAYALS.

It belongs to the NAD kinase family. The cofactor is a divalent metal cation.

It is found in the cytoplasm. The catalysed reaction is NAD(+) + ATP = ADP + NADP(+) + H(+). Involved in the regulation of the intracellular balance of NAD and NADP, and is a key enzyme in the biosynthesis of NADP. Catalyzes specifically the phosphorylation on 2'-hydroxyl of the adenosine moiety of NAD to yield NADP. The polypeptide is NAD kinase (Burkholderia multivorans (strain ATCC 17616 / 249)).